The primary structure comprises 120 residues: NAD(P)H-quinone oxidoreductase subunit 3, chloroplastic (120 aa).

3 helical membrane-spanning segments follow: residues isoleucine 9 to glycine 29, methionine 64 to methionine 84, and valine 88 to serine 108.

This sequence belongs to the complex I subunit 3 family. NDH is composed of at least 16 different subunits, 5 of which are encoded in the nucleus.

The protein localises to the plastid. Its subcellular location is the chloroplast thylakoid membrane. The catalysed reaction is a plastoquinone + NADH + (n+1) H(+)(in) = a plastoquinol + NAD(+) + n H(+)(out). It carries out the reaction a plastoquinone + NADPH + (n+1) H(+)(in) = a plastoquinol + NADP(+) + n H(+)(out). Functionally, NDH shuttles electrons from NAD(P)H:plastoquinone, via FMN and iron-sulfur (Fe-S) centers, to quinones in the photosynthetic chain and possibly in a chloroplast respiratory chain. The immediate electron acceptor for the enzyme in this species is believed to be plastoquinone. Couples the redox reaction to proton translocation, and thus conserves the redox energy in a proton gradient. The polypeptide is NAD(P)H-quinone oxidoreductase subunit 3, chloroplastic (Vitis vinifera (Grape)).